A 160-amino-acid chain; its full sequence is Transcription elongation factor GreA (160 aa).

Residues 1 to 72 (MAEKTYVMTL…QIQILETKIR (72 aa)) are a coiled coil.

The protein belongs to the GreA/GreB family.

In terms of biological role, necessary for efficient RNA polymerase transcription elongation past template-encoded arresting sites. The arresting sites in DNA have the property of trapping a certain fraction of elongating RNA polymerases that pass through, resulting in locked ternary complexes. Cleavage of the nascent transcript by cleavage factors such as GreA or GreB allows the resumption of elongation from the new 3'terminus. GreA releases sequences of 2 to 3 nucleotides. This Streptococcus thermophilus (strain CNRZ 1066) protein is Transcription elongation factor GreA.